A 518-amino-acid chain; its full sequence is MTKNKKYSYGTAGFRTKASDLEAAVYSSGVAAALRSMELKGKTIGVMITASHNPVEDNGVKIIDADGGMLAMEWEDKCTQLANAPSKAEFDFLIKQFLTPTTCQPKVIIGYDTRPSSPRLAELLKVCLDEMSASYIDYGYITTPQLHWLVRLINKSTAASFLEEGPPITEYYDTLTSAFSKIDPSMQDSPTVSRVVVDCANGVGSQPLKTVAGLVKDSLSIELVNTDVRASELLNNGCGADFVKTKQSPPLALEGKIKPNQLYASIDGDADRLIFYYINQNRKFHLLDGDKISTALVGYLNILVKKSGMPFSLGVVQTAYANGASTEYLQDLGITTVFTPTGVKHLHKAAKEFDIGVYFEANGHGTVLFSDKALANLAHPFFTPSPVQAAAIEQLQSYSVLINQAIGDAISDLLATISVLNALHWDASAWSNTYKDLPNKLAKVKVSDRTIYKSTDAERRLVSPDGLQEKIDALVAKYEKGRSFVRASGTEDVVRVYAEASTKQAADELCEKVCQLVL.

At threonine 49 the chain carries Phosphothreonine. The Phosphoserine intermediate role is filled by serine 51. Residues serine 51, aspartate 267, aspartate 269, and aspartate 271 each coordinate Mg(2+). Position 51 is a phosphoserine (serine 51). Residues 360 to 362 (EAN), 486 to 490 (RASGT), and arginine 495 each bind substrate.

This sequence belongs to the phosphohexose mutase family. Requires Mg(2+) as cofactor.

Its subcellular location is the cytoplasm. The protein resides in the nucleus. It carries out the reaction N-acetyl-alpha-D-glucosamine 1-phosphate = N-acetyl-D-glucosamine 6-phosphate. The protein operates within nucleotide-sugar biosynthesis; UDP-N-acetyl-alpha-D-glucosamine biosynthesis; N-acetyl-alpha-D-glucosamine 1-phosphate from alpha-D-glucosamine 6-phosphate (route I): step 2/2. Functionally, catalyzes the conversion of GlcNAc-6-P into GlcNAc-1-P during the synthesis of uridine diphosphate/UDP-GlcNAc, which is a biosynthetic precursor of chitin and also supplies the amino sugars for N-linked oligosaccharides of glycoproteins. The protein is Phosphoacetylglucosamine mutase 1 of Schizosaccharomyces pombe (strain 972 / ATCC 24843) (Fission yeast).